Reading from the N-terminus, the 108-residue chain is Nucleoid-associated protein BH02310 (108 aa).

The protein belongs to the YbaB/EbfC family. Homodimer.

It is found in the cytoplasm. Its subcellular location is the nucleoid. In terms of biological role, binds to DNA and alters its conformation. May be involved in regulation of gene expression, nucleoid organization and DNA protection. The chain is Nucleoid-associated protein BH02310 from Bartonella henselae (strain ATCC 49882 / DSM 28221 / CCUG 30454 / Houston 1) (Rochalimaea henselae).